Here is a 221-residue protein sequence, read N- to C-terminus: Deoxyribose-phosphate aldolase (221 aa).

Asp90 (proton donor/acceptor) is an active-site residue. Lys152 functions as the Schiff-base intermediate with acetaldehyde in the catalytic mechanism. Residue Lys181 is the Proton donor/acceptor of the active site.

The protein belongs to the DeoC/FbaB aldolase family. DeoC type 1 subfamily.

It localises to the cytoplasm. It catalyses the reaction 2-deoxy-D-ribose 5-phosphate = D-glyceraldehyde 3-phosphate + acetaldehyde. It participates in carbohydrate degradation; 2-deoxy-D-ribose 1-phosphate degradation; D-glyceraldehyde 3-phosphate and acetaldehyde from 2-deoxy-alpha-D-ribose 1-phosphate: step 2/2. Its function is as follows. Catalyzes a reversible aldol reaction between acetaldehyde and D-glyceraldehyde 3-phosphate to generate 2-deoxy-D-ribose 5-phosphate. This chain is Deoxyribose-phosphate aldolase, found in Exiguobacterium sibiricum (strain DSM 17290 / CCUG 55495 / CIP 109462 / JCM 13490 / 255-15).